We begin with the raw amino-acid sequence, 386 residues long: Phosphoglycerate kinase (386 aa).

Residues 21–23, arginine 36, 59–62, arginine 113, and arginine 146 each bind substrate; these read DLN and HLGR. ATP contacts are provided by residues lysine 197, glutamate 314, and 340-343; that span reads GGDT.

The protein belongs to the phosphoglycerate kinase family. Monomer.

Its subcellular location is the cytoplasm. The catalysed reaction is (2R)-3-phosphoglycerate + ATP = (2R)-3-phospho-glyceroyl phosphate + ADP. It functions in the pathway carbohydrate degradation; glycolysis; pyruvate from D-glyceraldehyde 3-phosphate: step 2/5. This chain is Phosphoglycerate kinase, found in Marinobacter nauticus (strain ATCC 700491 / DSM 11845 / VT8) (Marinobacter aquaeolei).